Consider the following 393-residue polypeptide: UDP-galactose translocator (393 aa).

Helical transmembrane passes span 3 to 23 (AVGS…AGAL), 37 to 57 (YISL…IRYA), 65 to 85 (FFAT…CLLL), 97 to 117 (LVLF…KLAV), 140 to 160 (TFQV…VLML), 169 to 189 (WASL…QAGG), 200 to 220 (GVGL…GVYF), 238 to 258 (LGLF…GTAV), 269 to 289 (PAVW…AVVV), and 315 to 335 (LFGF…IGAV). The disordered stretch occupies residues 353 to 393 (APTSGPCTHQQPPGQPPPPQLSSHHGDLSTEPFLPKSVLVK).

The protein belongs to the nucleotide-sugar transporter family. SLC35A subfamily. In terms of assembly, interacts with SLC35A3; the interaction is reduced in the presence of SLC35A4. Found in a complex with SLC35A3 and SLC35A4.

Its subcellular location is the golgi apparatus membrane. The enzyme catalyses UMP(out) + UDP-alpha-D-galactose(in) = UMP(in) + UDP-alpha-D-galactose(out). It carries out the reaction UDP-N-acetyl-alpha-D-galactosamine(in) + UMP(out) = UDP-N-acetyl-alpha-D-galactosamine(out) + UMP(in). The catalysed reaction is UMP(out) + UDP-alpha-D-glucose(in) = UMP(in) + UDP-alpha-D-glucose(out). It catalyses the reaction UMP(out) + UDP-N-acetyl-alpha-D-glucosamine(in) = UMP(in) + UDP-N-acetyl-alpha-D-glucosamine(out). The enzyme catalyses UDP-alpha-D-galactose(in) + AMP(out) = UDP-alpha-D-galactose(out) + AMP(in). It carries out the reaction UDP-alpha-D-galactose(in) + CMP(out) = UDP-alpha-D-galactose(out) + CMP(in). The catalysed reaction is UDP-N-acetyl-alpha-D-galactosamine(out) + UDP-alpha-D-galactose(in) = UDP-N-acetyl-alpha-D-galactosamine(in) + UDP-alpha-D-galactose(out). It catalyses the reaction UDP-N-acetyl-alpha-D-glucosamine(out) + UDP-alpha-D-galactose(in) = UDP-N-acetyl-alpha-D-glucosamine(in) + UDP-alpha-D-galactose(out). The enzyme catalyses UDP-alpha-D-galactose(in) + UDP-alpha-D-glucose(out) = UDP-alpha-D-galactose(out) + UDP-alpha-D-glucose(in). It carries out the reaction UMP(out) + CMP(in) = UMP(in) + CMP(out). The catalysed reaction is UMP(out) + AMP(in) = UMP(in) + AMP(out). Transports uridine diphosphate galactose (UDP-galactose) from the cytosol into the Golgi apparatus, functioning as an antiporter that exchanges UDP-galactose for UMP. It is also able to exchange UDP-galactose for AMP and CMP, and to transport UDP-N-acetylgalactosamine (UDP-GalNAc) and other nucleotide sugars. As a provider of UDP-galactose to galactosyltransferases present in the Golgi apparatus, it is necessary for globotriaosylceramide/globoside (Gb3Cer) synthesis from lactosylceramide. The sequence is that of UDP-galactose translocator from Bos taurus (Bovine).